The chain runs to 555 residues: Cinnamate beta-D-glucosyltransferase (555 aa).

The active-site Proton acceptor is H19. Residue H19 coordinates an anthocyanidin. UDP-alpha-D-glucose-binding residues include Q344, H359, W362, N363, S364, and E367. An anthocyanidin is bound at residue G382. Positions 383 and 384 each coordinate UDP-alpha-D-glucose.

It belongs to the UDP-glycosyltransferase family. Highest expression detected in fruit, with lower levels detected in flower and petiole. Barely detectable in leaf and root.

It catalyses the reaction (E)-cinnamate + UDP-alpha-D-glucose = 1-O-(trans-cinnamoyl)-beta-D-glucose + UDP. In terms of biological role, broad spectrum multifunctional glucosyltransferase. Catalyzes the formation of cinnamic acid and p-coumaric acid glucose esters during fruit ripening. Accepted substrates range from derivatives of cinnamic acid and benzoic acid to heterocyclic and aliphatic compounds, resulting in the formation of O- and S-glucose esters and O-glucosides. May also be involved in detoxification of xenobiotics. The sequence is that of Cinnamate beta-D-glucosyltransferase from Fragaria ananassa (Strawberry).